A 644-amino-acid chain; its full sequence is Protein cueball (644 aa).

The first 26 residues, Met-1–Gly-26, serve as a signal peptide directing secretion. Topologically, residues Thr-27–Ser-531 are extracellular. 2 N-linked (GlcNAc...) asparagine glycosylation sites follow: Asn-82 and Asn-108. LDL-receptor class B repeat units follow at residues Met-121–Arg-166, Arg-167–Ser-211, and Asp-212–Ala-257. Residues Asn-175 and Asn-190 are each glycosylated (N-linked (GlcNAc...) asparagine). A glycan (N-linked (GlcNAc...) asparagine) is linked at Asn-313. 2 EGF-like domains span residues Glu-398–Glu-430 and Glu-433–Glu-471. 5 cysteine pairs are disulfide-bonded: Cys-402-Cys-411, Cys-406-Cys-421, Cys-437-Cys-447, Cys-441-Cys-459, and Cys-461-Cys-470. 2 N-linked (GlcNAc...) asparagine glycosylation sites follow: Asn-473 and Asn-508. Residues Ser-532–Val-552 form a helical membrane-spanning segment. At His-553–Tyr-644 the chain is on the cytoplasmic side.

Belongs to the cueball family.

It is found in the cell membrane. Has a role in spermatogenesis and oogenesis. In Drosophila simulans (Fruit fly), this protein is Protein cueball.